A 205-amino-acid chain; its full sequence is Thymidylate kinase (205 aa).

Position 7–14 (7–14) interacts with ATP; that stretch reads GIDGSGKT.

This sequence belongs to the thymidylate kinase family.

The catalysed reaction is dTMP + ATP = dTDP + ADP. In terms of biological role, phosphorylation of dTMP to form dTDP in both de novo and salvage pathways of dTTP synthesis. The chain is Thymidylate kinase from Wolbachia sp. subsp. Brugia malayi (strain TRS).